Here is a 101-residue protein sequence, read N- to C-terminus: MKILVKIRLTRVGTHKKPFFRIVVMDAKAKANGAYIENLGHYDPVLGKVVLKKEAILAQLQNGAQPSETVKNILSQEGIWKEFIALKDANKKRKAALAKAK.

It belongs to the bacterial ribosomal protein bS16 family.

The chain is Small ribosomal subunit protein bS16 from Ureaplasma urealyticum serovar 10 (strain ATCC 33699 / Western).